A 252-amino-acid polypeptide reads, in one-letter code: MIKKRVIPCLDVKDGRVVKGIQFQSLRDIGNPVDLALYYNEAGADELVFLDISKTEAGHDLMIEVIEATAKQLFIPLTVGGGIQNLDDITQLLNHGADKISLNSSALKHPELIRQASEKFGRQCICIAIDSFYDKDRKDYFCTTHGGKKLTDVRVYDWVQEVELLGAGELLITSMHHDGMKQGFDIEHLAKIKQLVNIPIIASGGGGNAQHFVELFQQTDVSAGLAASILHDQETTVAEIKDKMREGGILVR.

Active-site residues include aspartate 11 and aspartate 130.

It belongs to the HisA/HisF family. As to quaternary structure, heterodimer of HisH and HisF.

It localises to the cytoplasm. It carries out the reaction 5-[(5-phospho-1-deoxy-D-ribulos-1-ylimino)methylamino]-1-(5-phospho-beta-D-ribosyl)imidazole-4-carboxamide + L-glutamine = D-erythro-1-(imidazol-4-yl)glycerol 3-phosphate + 5-amino-1-(5-phospho-beta-D-ribosyl)imidazole-4-carboxamide + L-glutamate + H(+). Its pathway is amino-acid biosynthesis; L-histidine biosynthesis; L-histidine from 5-phospho-alpha-D-ribose 1-diphosphate: step 5/9. In terms of biological role, IGPS catalyzes the conversion of PRFAR and glutamine to IGP, AICAR and glutamate. The HisF subunit catalyzes the cyclization activity that produces IGP and AICAR from PRFAR using the ammonia provided by the HisH subunit. This chain is Imidazole glycerol phosphate synthase subunit HisF, found in Staphylococcus epidermidis (strain ATCC 12228 / FDA PCI 1200).